The sequence spans 157 residues: Glutathione peroxidase (157 aa).

C35 is an active-site residue.

The protein belongs to the glutathione peroxidase family.

The catalysed reaction is 2 glutathione + H2O2 = glutathione disulfide + 2 H2O. In Lactococcus lactis subsp. cremoris (strain MG1363), this protein is Glutathione peroxidase (gpo).